The following is a 271-amino-acid chain: Tryptophan synthase alpha chain (271 aa).

Residues glutamate 49 and aspartate 60 each act as proton acceptor in the active site.

Belongs to the TrpA family. As to quaternary structure, tetramer of two alpha and two beta chains.

It catalyses the reaction (1S,2R)-1-C-(indol-3-yl)glycerol 3-phosphate + L-serine = D-glyceraldehyde 3-phosphate + L-tryptophan + H2O. Its pathway is amino-acid biosynthesis; L-tryptophan biosynthesis; L-tryptophan from chorismate: step 5/5. In terms of biological role, the alpha subunit is responsible for the aldol cleavage of indoleglycerol phosphate to indole and glyceraldehyde 3-phosphate. This is Tryptophan synthase alpha chain from Aromatoleum aromaticum (strain DSM 19018 / LMG 30748 / EbN1) (Azoarcus sp. (strain EbN1)).